A 1191-amino-acid polypeptide reads, in one-letter code: Rho GTPase-activating protein 20 (1191 aa).

Residues 1-23 (MEAMSPQQETLGGQPGRSSSLTG) are compositionally biased toward polar residues. Residues 1–45 (MEAMSPQQETLGGQPGRSSSLTGVSRLAGGSCTKKKMKTLAERRR) form a disordered region. Ser-46 carries the phosphoserine modification. A PH domain is found at 78–180 (SLVCSNRTLL…EQKDKWLSLL (103 aa)). The Ras-associating domain occupies 194–295 (KSIPLKIFAK…TPFNLQEPFL (102 aa)). Residues 365–551 (ISLPNICEND…FLIENCLRIF (187 aa)) enclose the Rho-GAP domain. Phosphoserine is present on residues Ser-704 and Ser-730. 4 disordered regions span residues 768–791 (SKKNATTQNTKKKSLSGSEGNHVK), 926–1014 (RLNL…SRPA), 1052–1123 (KKAK…RHCS), and 1140–1191 (HEEI…TKDI). Over residues 934-961 (SYSSLSSPGTSPSGSSVSSQDSAFSQIS) the composition is skewed to low complexity. Polar residues-rich tracts occupy residues 962–981 (EHSVFTPTETSSPIDCTFQA) and 1103–1116 (PVQSAQRCSSSPFQ). Positions 1182–1191 (IEDRYLTKDI) are enriched in basic and acidic residues.

As to expression, expressed predominantly in the brain. Lower expression is found in lymph nodes.

In terms of biological role, GTPase activator for the Rho-type GTPases by converting them to an inactive GDP-bound state. The chain is Rho GTPase-activating protein 20 (ARHGAP20) from Homo sapiens (Human).